We begin with the raw amino-acid sequence, 441 residues long: tRNA-2-methylthio-N(6)-dimethylallyladenosine synthase (441 aa).

The MTTase N-terminal domain occupies Lys5–Glu121. Cys14, Cys50, Cys84, Cys159, Cys163, and Cys166 together coordinate [4Fe-4S] cluster. In terms of domain architecture, Radical SAM core spans Ala145 to Ala375. The region spanning Arg378–His440 is the TRAM domain.

This sequence belongs to the methylthiotransferase family. MiaB subfamily. In terms of assembly, monomer. [4Fe-4S] cluster is required as a cofactor.

It localises to the cytoplasm. The catalysed reaction is N(6)-dimethylallyladenosine(37) in tRNA + (sulfur carrier)-SH + AH2 + 2 S-adenosyl-L-methionine = 2-methylsulfanyl-N(6)-dimethylallyladenosine(37) in tRNA + (sulfur carrier)-H + 5'-deoxyadenosine + L-methionine + A + S-adenosyl-L-homocysteine + 2 H(+). Functionally, catalyzes the methylthiolation of N6-(dimethylallyl)adenosine (i(6)A), leading to the formation of 2-methylthio-N6-(dimethylallyl)adenosine (ms(2)i(6)A) at position 37 in tRNAs that read codons beginning with uridine. The protein is tRNA-2-methylthio-N(6)-dimethylallyladenosine synthase of Citrifermentans bemidjiense (strain ATCC BAA-1014 / DSM 16622 / JCM 12645 / Bem) (Geobacter bemidjiensis).